Reading from the N-terminus, the 298-residue chain is 4-hydroxy-tetrahydrodipicolinate synthase (298 aa).

Thr48 contacts pyruvate. The active-site Proton donor/acceptor is Tyr137. Lys166 serves as the catalytic Schiff-base intermediate with substrate. Ile207 is a pyruvate binding site.

It belongs to the DapA family. As to quaternary structure, homotetramer; dimer of dimers.

It localises to the cytoplasm. It carries out the reaction L-aspartate 4-semialdehyde + pyruvate = (2S,4S)-4-hydroxy-2,3,4,5-tetrahydrodipicolinate + H2O + H(+). It functions in the pathway amino-acid biosynthesis; L-lysine biosynthesis via DAP pathway; (S)-tetrahydrodipicolinate from L-aspartate: step 3/4. Catalyzes the condensation of (S)-aspartate-beta-semialdehyde [(S)-ASA] and pyruvate to 4-hydroxy-tetrahydrodipicolinate (HTPA). The chain is 4-hydroxy-tetrahydrodipicolinate synthase from Campylobacter jejuni subsp. jejuni serotype O:23/36 (strain 81-176).